Reading from the N-terminus, the 468-residue chain is Probable soluble pyridine nucleotide transhydrogenase (468 aa).

33-42 (ERGRMLGGVC) contacts FAD.

Belongs to the class-I pyridine nucleotide-disulfide oxidoreductase family. Requires FAD as cofactor.

Its subcellular location is the cytoplasm. It catalyses the reaction NAD(+) + NADPH = NADH + NADP(+). Conversion of NADPH, generated by peripheral catabolic pathways, to NADH, which can enter the respiratory chain for energy generation. The protein is Probable soluble pyridine nucleotide transhydrogenase (sthA) of Mycobacterium bovis (strain ATCC BAA-935 / AF2122/97).